A 1888-amino-acid polypeptide reads, in one-letter code: MAMKPEVEQELAHVLLTELLAYQFASPVRWIETQDVFLKDFNTERVVEIGPSPTLAGMAQRTIKNKYESYDAALSLQRQVLCYSKDAKEIYYTPDPADLAPVEEPNAEEQTGAAATPAAAAAPAAAAAAPAAPAARPVAELPDEAVKASLLLHVLVAQKLKKSLEQVPMSKTIKDLVGGKSTVQNEILGDLGKEFGSTPEKPEETPLEELAETFQDTFAGSLGKQSSSLISRLMSSKMPGGFTITVARKYLQTRWGLGSGRQDSVLLIALTNEPASRLGGEADAKSFLDSMAQKYASISGVDLSSASAGASAGAGAGGAGGATIDAAAFEELTKDQKVMARQQLEVLARYLKMDLNGGEKKFLQEKNTVAELQSQLDYLNNELGEYFIQGISTSFSRKKARVFDSSWNWAKQALLTLYFQIIHGVLKNVDREVVTEAINIMNRSNETLIKFMEYHISHCDENNGENYKLAKTLGHQLIENCKQVLDMDPVYKDISKPTGPKTNIDKNGNIKYSEEPRAAVRKLSQYVQEMALGGPLTKESQPTIQEDLTRVYKAINAQAAEHNISDSTKLEFEKLYGELLKFLETSNEIDASATTRLAGVVDDDLDKDSTKEVASLPNKSEISKNVSSIIPRETVPFLHLKKKLPSCEWAYDRQLSTLFLDGLEKAAINGVTFKDKYVLITGAGAGSIGAEVLQGLVQGGAKVIVTTSRFSKKVTDYYQSIYAQYGAKGSTLVVVPFNQGSKQDVEALIDFIYDDEKNGGLGWDLDAVIPFAAIPENGIELDKIDSKSEFAHRIMLTNILRMLGSVKKQKSARGIETRPAQVILPLSPNHGTFGGDGMYSESKLSLETLFNRWHSESWSNQLTICGAIIGWTRGTGLMNANNIIAEGIEKMGVRTFSQKEMAFNLLGLLIPEVVNLCQRSPVMADLNGGLQFLTDLKEFTGKLRGELTETSEIRKAVSIETALEHKTVAGANADAAFAQVEVQPRANIQLEFPTLKPYETVKKIGSPDLEGLLDLEKVIVVTGFSEVGPWGSSRTRGEMEAFGEFSLEGCVEMSWIMGLIKYHNGNLKGRPYTGWVDSKTNEPVDDKDIKAKDESHVLEHSGIRLIEPELFNSYNPEKKQMIQEVVIEEDLEPFEASKETAEQFKHEHGDKVDIFEIPETGEFSVRLLKGATLYIPKALRFDRLVAGQIPTGWNAKTYGISDDTISQVDPITLFVLVSVIEAFIASGITDPYEMYKYVHVSEVGNCSGSGMGGVSALRGMFKDRYKDQPVQNDILQESFINTMSAWVNMLLISSSGPIKTPVGACATAVESLDIGVETILSGKAKICIVGGYDDFQEEGSYEFGNMNATSNSLDEFDHGRTPAEMSRPATTTRNGFMEAQGAGIQVIMNADLALKMGVPIYGILALTATATDKIGRSVPAPGKGILTTAREHHGNLKFPTPLLDIKYRKRQLKNREAQIKQWVETELEMLKYEAEGIPAEDQETFYAERTEEIKREATRQLKSAQAQWGSEFYKNDPRIAPLRGALATYGLTIDDLGVASFHGTSTKANDKNESATINEMMKHLGRSEGNPVLGVFQKYLTGHPKGAAGAWMMNGALQILNSGIVPGNRNADNVDKLLQQFEYILYPSRSLKTDGIKAVSVTSFGFGQKGAQAVAVHPDFLYAAVDEATYNAYVAKVTAREKAAYKYFHNGMIHNTLFVSKEHAPYSDELEQPVYLDPLARVSSDKKTGALVFNGKGIQSSSQFVSEENRKTATIVSELAKKTAGTDASGVGVDVELIKSINVENDTFIERNFTEAEIAYCKKQPSVQSSFAGTWSAKEAVFKSLGVKSQGGGASLKDIEITREAGKGPEVVLHGAAKEAATKANVKNVKVSISHDDFQSVAVAVSEK.

A disordered region spans residues 98–118 (DLAPVEEPNAEEQTGAAATPA). The Carrier domain occupies 146–221 (VKASLLLHVL…ETFQDTFAGS (76 aa)). Ser-181 is modified (O-(pantetheine 4'-phosphoryl)serine). Positions 675–874 (DKYVLITGAG…CGAIIGWTRG (200 aa)) are beta-ketoacyl reductase. The Ketosynthase family 3 (KS3) domain maps to 1119–1657 (KQMIQEVVIE…QKGAQAVAVH (539 aa)). Active-site for beta-ketoacyl synthase activity residues include Cys-1305, His-1542, and His-1583. Residues Asp-1774, Val-1775, and Glu-1776 each coordinate Mg(2+). Acetyl-CoA contacts are provided by residues 1774–1776 (DVE), Tyr-1800, Ser-1810, 1819–1829 (EAVFKSLGVKS), 1843–1846 (REAG), and 1873–1875 (ISH). Mg(2+) contacts are provided by Ser-1874 and His-1875.

This sequence belongs to the thiolase-like superfamily. Fungal fatty acid synthetase subunit alpha family. Fatty acid synthase is composed of alpha and beta subunits.

The enzyme catalyses acetyl-CoA + n malonyl-CoA + 2n NADPH + 4n H(+) = a long-chain-acyl-CoA + n CoA + n CO2 + 2n NADP(+).. It carries out the reaction a fatty acyl-[ACP] + malonyl-[ACP] + H(+) = a 3-oxoacyl-[ACP] + holo-[ACP] + CO2. The catalysed reaction is a (3R)-hydroxyacyl-[ACP] + NADP(+) = a 3-oxoacyl-[ACP] + NADPH + H(+). In terms of biological role, fatty acid synthetase catalyzes the formation of long-chain fatty acids from acetyl-CoA, malonyl-CoA and NADPH. The alpha subunit contains domains for: acyl carrier protein, 3-oxoacyl-[acyl-carrier-protein] reductase, and 3-oxoacyl-[acyl-carrier-protein] synthase. In this species, higher amounts of C18 than C16 fatty acids are produced. The protein is Fatty acid synthase subunit alpha (FAS2) of Lachancea kluyveri (Yeast).